Consider the following 133-residue polypeptide: Ribosome-binding factor A (133 aa).

It belongs to the RbfA family. In terms of assembly, monomer. Binds 30S ribosomal subunits, but not 50S ribosomal subunits or 70S ribosomes.

It is found in the cytoplasm. Functionally, one of several proteins that assist in the late maturation steps of the functional core of the 30S ribosomal subunit. Associates with free 30S ribosomal subunits (but not with 30S subunits that are part of 70S ribosomes or polysomes). Required for efficient processing of 16S rRNA. May interact with the 5'-terminal helix region of 16S rRNA. This Escherichia coli O127:H6 (strain E2348/69 / EPEC) protein is Ribosome-binding factor A.